We begin with the raw amino-acid sequence, 203 residues long: Urease accessory protein UreG (203 aa).

12-19 contacts GTP; sequence GPVGSGKT.

Belongs to the SIMIBI class G3E GTPase family. UreG subfamily. Homodimer. UreD, UreF and UreG form a complex that acts as a GTP-hydrolysis-dependent molecular chaperone, activating the urease apoprotein by helping to assemble the nickel containing metallocenter of UreC. The UreE protein probably delivers the nickel.

The protein resides in the cytoplasm. Its function is as follows. Facilitates the functional incorporation of the urease nickel metallocenter. This process requires GTP hydrolysis, probably effectuated by UreG. The protein is Urease accessory protein UreG of Nitrosococcus oceani (strain ATCC 19707 / BCRC 17464 / JCM 30415 / NCIMB 11848 / C-107).